The following is a 257-amino-acid chain: tRNA pseudouridine synthase A (257 aa).

The Nucleophile role is filled by aspartate 53. Position 111 (tyrosine 111) interacts with substrate.

The protein belongs to the tRNA pseudouridine synthase TruA family. Homodimer.

It carries out the reaction uridine(38/39/40) in tRNA = pseudouridine(38/39/40) in tRNA. In terms of biological role, formation of pseudouridine at positions 38, 39 and 40 in the anticodon stem and loop of transfer RNAs. The chain is tRNA pseudouridine synthase A from Xanthomonas euvesicatoria pv. vesicatoria (strain 85-10) (Xanthomonas campestris pv. vesicatoria).